The sequence spans 317 residues: Beta-ketoacyl-[acyl-carrier-protein] synthase III (317 aa).

Active-site residues include cysteine 112 and histidine 244. An ACP-binding region spans residues 245-249; the sequence is QANLR. The active site involves asparagine 274.

The protein belongs to the thiolase-like superfamily. FabH family. In terms of assembly, homodimer.

The protein localises to the cytoplasm. It carries out the reaction malonyl-[ACP] + acetyl-CoA + H(+) = 3-oxobutanoyl-[ACP] + CO2 + CoA. It participates in lipid metabolism; fatty acid biosynthesis. Its function is as follows. Catalyzes the condensation reaction of fatty acid synthesis by the addition to an acyl acceptor of two carbons from malonyl-ACP. Catalyzes the first condensation reaction which initiates fatty acid synthesis and may therefore play a role in governing the total rate of fatty acid production. Possesses both acetoacetyl-ACP synthase and acetyl transacylase activities. Its substrate specificity determines the biosynthesis of branched-chain and/or straight-chain of fatty acids. The chain is Beta-ketoacyl-[acyl-carrier-protein] synthase III from Salmonella typhimurium (strain LT2 / SGSC1412 / ATCC 700720).